Reading from the N-terminus, the 296-residue chain is MNKEQLEKMTNGKGFIAALDQSGGSTPKALKEYGVNEDEYSNDDEMFQLVHDMRTRVVTSPSFSPDKILGAILFEQTMDREVEGKYTGDYLADKGVVPFLKVDKGLAEQQNGVQLMKPIDDLDDTLDRAVERHIFGTKMRSNILELNEQGIKDVVEQQFEFAKKIIAKGLVPIIEPEVNINAKDKAEIEEVLKAELKKGLDALNDDQLVMLKLTIPTKANLYKELADHPNVVRVVVLSGGYSRDEANKLLKDNDELIASFSRALASDLRASQSQEEFDKALGDAVDSIYDASVNKN.

Catalysis depends on glutamate 175, which acts as the Proton acceptor. The active-site Schiff-base intermediate with dihydroxyacetone-P is lysine 212.

Belongs to the class I fructose-bisphosphate aldolase family.

It carries out the reaction beta-D-fructose 1,6-bisphosphate = D-glyceraldehyde 3-phosphate + dihydroxyacetone phosphate. The protein operates within carbohydrate degradation; glycolysis; D-glyceraldehyde 3-phosphate and glycerone phosphate from D-glucose: step 4/4. The sequence is that of Fructose-bisphosphate aldolase class 1 from Staphylococcus haemolyticus (strain JCSC1435).